A 323-amino-acid chain; its full sequence is Global nitrogen regulator NrpRI (323 aa).

Residues 11 to 76 (IEIMRVIHES…TLTDLGENEM (66 aa)) are winged helix-turn-helix. An NRD region spans residues 86–323 (GFVISRIEEM…MLDYQTMKEI (238 aa)).

Belongs to the NrpR family. In terms of assembly, forms a complex with NrpRII and the general archaeal transcription factors TBP and TFB. Interacts directly with NrpRII.

With respect to regulation, under nitrogen limitation, binding of 2-oxoglutarate to the NrpRI/NrpRII complex decreases the binding affinity of NrpRI to DNA as well as the binding affinity of NrpRII to TBP and TFB, which leads to removal of the complex from the operator, RNA polymerase recruitment and initiation of transcription. In terms of biological role, plays a major role in nitrogen regulation. Under nitrogen sufficiency, binds to the nifH and the glnk1 promoters, leading to repression of the transcription of the genes. In Methanosarcina mazei (strain ATCC BAA-159 / DSM 3647 / Goe1 / Go1 / JCM 11833 / OCM 88) (Methanosarcina frisia), this protein is Global nitrogen regulator NrpRI.